Consider the following 472-residue polypeptide: Bifunctional protein HldE (472 aa).

The segment at 1 to 315 (MAKRVKILVV…QLLNSSFGAN (315 aa)) is ribokinase. 192–195 (NKKE) contributes to the ATP binding site. Asp-260 is a catalytic residue. Residues 340–472 (FTNGCFDILH…IKDAKNDDKK (133 aa)) form a cytidylyltransferase region.

The protein in the N-terminal section; belongs to the carbohydrate kinase PfkB family. It in the C-terminal section; belongs to the cytidylyltransferase family. Homodimer.

The catalysed reaction is D-glycero-beta-D-manno-heptose 7-phosphate + ATP = D-glycero-beta-D-manno-heptose 1,7-bisphosphate + ADP + H(+). It carries out the reaction D-glycero-beta-D-manno-heptose 1-phosphate + ATP + H(+) = ADP-D-glycero-beta-D-manno-heptose + diphosphate. It functions in the pathway nucleotide-sugar biosynthesis; ADP-L-glycero-beta-D-manno-heptose biosynthesis; ADP-L-glycero-beta-D-manno-heptose from D-glycero-beta-D-manno-heptose 7-phosphate: step 1/4. Its pathway is nucleotide-sugar biosynthesis; ADP-L-glycero-beta-D-manno-heptose biosynthesis; ADP-L-glycero-beta-D-manno-heptose from D-glycero-beta-D-manno-heptose 7-phosphate: step 3/4. Catalyzes the phosphorylation of D-glycero-D-manno-heptose 7-phosphate at the C-1 position to selectively form D-glycero-beta-D-manno-heptose-1,7-bisphosphate. Functionally, catalyzes the ADP transfer from ATP to D-glycero-beta-D-manno-heptose 1-phosphate, yielding ADP-D-glycero-beta-D-manno-heptose. This Campylobacter concisus (strain 13826) protein is Bifunctional protein HldE.